Reading from the N-terminus, the 529-residue chain is DEP domain-containing protein 1B (529 aa).

One can recognise a DEP domain in the interval 24–108 (FRAGMPLRKH…DDGHLYRFPP (85 aa)). Residues 192-393 (ARLQKVLGLD…FLMDNYQEIL (202 aa)) enclose the Rho-GAP domain.

This Gallus gallus (Chicken) protein is DEP domain-containing protein 1B (DEPDC1B).